Consider the following 626-residue polypeptide: Serine/threonine-protein kinase PknH (626 aa).

Residues 1-403 are Cytoplasmic-facing; the sequence is MSDAQDSRVG…QTPRKTNPWP (403 aa). A Protein kinase domain is found at 16–276; that stretch reads YHLKRLLGRG…DLALAAHEAL (261 aa). ATP-binding positions include 22-30 and Lys45; that span reads LGRGGMGEV. Catalysis depends on Asp139, which acts as the Proton acceptor. The residue at position 170 (Thr170) is a Phosphothreonine. Positions 292–396 are disordered; it reads QESTLPAPPK…GGPSPWAQTP (105 aa). 2 stretches are compositionally biased toward pro residues: residues 297–308 and 316–342; these read PAPPKPVPPPTM and RQPP…PAQP. Low complexity predominate over residues 343–355; sequence GPAGQRPGPTGQP. The helical transmembrane segment at 404 to 424 threads the bilayer; that stretch reads LVAGAAAVVLVLVLGAIGIWI. The Extracellular segment spans residues 425 to 626; that stretch reads AIRPKPVQPP…AKIVDKVNKE (202 aa). 2 disulfides stabilise this stretch: Cys482-Cys545 and Cys587-Cys604.

This sequence belongs to the protein kinase superfamily. Ser/Thr protein kinase family. Requires a divalent metal cation as cofactor. In terms of processing, autophosphorylated on threonine and serine residues. Dephosphorylated by PstP.

The protein resides in the cell membrane. The enzyme catalyses L-seryl-[protein] + ATP = O-phospho-L-seryl-[protein] + ADP + H(+). It catalyses the reaction L-threonyl-[protein] + ATP = O-phospho-L-threonyl-[protein] + ADP + H(+). Its function is as follows. May regulate bacterial growth in response to external signals to facilitate adaptation to the host environment. The sequence is that of Serine/threonine-protein kinase PknH (pknH) from Mycobacterium tuberculosis (strain CDC 1551 / Oshkosh).